Consider the following 473-residue polypeptide: 3-isopropylmalate dehydratase large subunit (473 aa).

3 residues coordinate [4Fe-4S] cluster: cysteine 353, cysteine 414, and cysteine 417.

This sequence belongs to the aconitase/IPM isomerase family. LeuC type 1 subfamily. Heterodimer of LeuC and LeuD. It depends on [4Fe-4S] cluster as a cofactor.

The catalysed reaction is (2R,3S)-3-isopropylmalate = (2S)-2-isopropylmalate. It functions in the pathway amino-acid biosynthesis; L-leucine biosynthesis; L-leucine from 3-methyl-2-oxobutanoate: step 2/4. Functionally, catalyzes the isomerization between 2-isopropylmalate and 3-isopropylmalate, via the formation of 2-isopropylmaleate. The polypeptide is 3-isopropylmalate dehydratase large subunit (Cellvibrio japonicus (strain Ueda107) (Pseudomonas fluorescens subsp. cellulosa)).